The sequence spans 447 residues: Asparagine--tRNA ligase (447 aa).

This sequence belongs to the class-II aminoacyl-tRNA synthetase family. In terms of assembly, homodimer.

The protein resides in the cytoplasm. It catalyses the reaction tRNA(Asn) + L-asparagine + ATP = L-asparaginyl-tRNA(Asn) + AMP + diphosphate + H(+). This Lactococcus lactis subsp. cremoris (strain MG1363) protein is Asparagine--tRNA ligase.